The sequence spans 668 residues: Tastin (668 aa).

Disordered stretches follow at residues 1–102 (MTTL…GGSN), 154–177 (ERKG…PRIP), and 189–285 (FSRL…GRHH). S16 is subject to Phosphoserine. Composition is skewed to polar residues over residues 27-37 (QRCQDFSSVKS) and 55-64 (PRSTQRQRPL). S97 carries the post-translational modification Phosphoserine. The span at 158 to 168 (GTTQRGQSARS) shows a compositional bias: polar residues. Position 169 is a phosphoserine (S169). Basic and acidic residues-rich tracts occupy residues 227–246 (ELRR…DRRT) and 269–282 (GEQE…DGGG). S306, S324, and S338 each carry phosphoserine. Disordered stretches follow at residues 364–392 (ITLQ…HQEL) and 462–502 (TEPL…AEPE).

In terms of assembly, directly binds bystin, and indirectly trophinin.

The protein resides in the cytoplasm. Its function is as follows. Could be involved with bystin and trophinin in a cell adhesion molecule complex that mediates an initial attachment of the blastocyst to uterine epithelial cells at the time of the embryo implantation. The sequence is that of Tastin from Mus musculus (Mouse).